Here is a 421-residue protein sequence, read N- to C-terminus: Na(+)/H(+) antiporter NhaA 1 (421 aa).

11 helical membrane passes run 48–68 (SSGL…NSPW), 93–113 (LYWW…GLEI), 129–149 (SLAL…YTLV), 157–177 (AGWG…LALL), 187–207 (VLLA…IALF), 215–235 (LALG…AAGV), 253–273 (LASG…IPLG), 299–319 (FLIL…GGSL), 326–346 (VVLG…WLAV), 364–384 (GLGL…GLAF), and 392–412 (AAKL…ITVL).

The protein belongs to the NhaA Na(+)/H(+) (TC 2.A.33) antiporter family.

Its subcellular location is the cell membrane. The enzyme catalyses Na(+)(in) + 2 H(+)(out) = Na(+)(out) + 2 H(+)(in). Functionally, na(+)/H(+) antiporter that extrudes sodium in exchange for external protons. The chain is Na(+)/H(+) antiporter NhaA 1 from Deinococcus geothermalis (strain DSM 11300 / CIP 105573 / AG-3a).